The sequence spans 246 residues: MYLLVDVGNTHSVFSITEDGKTFRRWRLSTGVFQTEDELFSHLHPLLGDTMREIKGIGVASVVPTQNTVIERFSQKYFHISPIWVKAKDGCVKWNVKNPSEVGADRVANVVAFVKEYGKNGIIIDMGTATTVDLVVNGSYEGGAILPGLFMMVHSLFRGTAKLPLVEVKPADFVVGKDTEENIRLGVVNGSVYALEGIIGRMKEVYGDLPVVLTGGQSKIVKDMIKHEIFDEDLTIKGVYHFCFGD.

An ATP-binding site is contributed by 6–13 (DVGNTHSV). Substrate is bound at residue 103–106 (GADR). The active-site Proton acceptor is the D105. D125 serves as a coordination point for K(+). T128 provides a ligand contact to ATP. Residue T179 coordinates substrate.

Belongs to the type III pantothenate kinase family. Homodimer. NH4(+) is required as a cofactor. K(+) serves as cofactor.

It is found in the cytoplasm. The catalysed reaction is (R)-pantothenate + ATP = (R)-4'-phosphopantothenate + ADP + H(+). It participates in cofactor biosynthesis; coenzyme A biosynthesis; CoA from (R)-pantothenate: step 1/5. Catalyzes the phosphorylation of pantothenate (Pan), the first step in CoA biosynthesis. The protein is Type III pantothenate kinase of Thermotoga sp. (strain RQ2).